The sequence spans 210 residues: Insulin receptor (210 aa).

The Fibronectin type-III domain maps to 1 to 96 (VSNSSSQIIL…SQILKELEES (96 aa)). N-linked (GlcNAc...) asparagine glycosylation is found at asparagine 3, asparagine 21, and asparagine 68. The segment at 55-78 (WSPPFESEDSQKHNQSEYEDSAGE) is disordered. Residues 103–111 (EDYLHNVVF) form an insulin-binding region. The segment at 116–169 (TSSGTGAEDPRPSRKRRSLGDVGNVTVAVPTVAAFPNTSSTSTPTSPEEHRPFE) is disordered. At 133-210 (SLGDVGNVTV…EERCSVAAYV (78 aa)) the chain is on the extracellular side. A compositionally biased stretch (low complexity) spans 137-161 (VGNVTVAVPTVAAFPNTSSTSTPTS). Asparagine 139 and asparagine 152 each carry an N-linked (GlcNAc...) asparagine glycan. Residues cysteine 195 and cysteine 204 are joined by a disulfide bond.

It belongs to the protein kinase superfamily. Tyr protein kinase family. Insulin receptor subfamily. Tetramer of 2 alpha and 2 beta chains linked by disulfide bonds. The alpha chains carry the insulin-binding regions, while the beta chains carry the kinase domain. Forms a hybrid receptor with IGF1R, the hybrid is a tetramer consisting of 1 alpha chain and 1 beta chain of INSR and 1 alpha chain and 1 beta chain of IGF1R. Interacts with SORBS1 but dissociates from it following insulin stimulation. Binds SH2B2. Activated form of INSR interacts (via phosphorylated Tyrosine) with the PTB/PID domains of IRS1 and SHC1. The sequences surrounding the phosphorylated NPXY motif contribute differentially to either IRS1 or SHC1 recognition. Interacts (via tyrosines in the C-terminus) with IRS2 (via PTB domain and 591-786 AA); the 591-786 would be the primary anchor of IRS2 to INSR while the PTB domain would have a stabilizing action on the interaction with INSR. Interacts with the SH2 domains of the 85 kDa regulatory subunit of PI3K (PIK3R1) in vitro, when autophosphorylated on tyrosine residues. Interacts with SOCS7. Interacts with SOCS3. Interacts with SOCS1. Interacts with CAV2 (tyrosine-phosphorylated form); the interaction is increased with 'Tyr-27'phosphorylation of CAV2. Interacts with ARRB2. Interacts with GRB10; this interaction blocks the association between IRS1/IRS2 and INSR, significantly reduces insulin-stimulated tyrosine phosphorylation of IRS1 and IRS2 and thus decreases insulin signaling. Interacts with GRB7. Interacts with PDPK1. Interacts with GRB14 (via BPS domain). Interacts (via subunit alpha) with ENPP1 (via 485-599 AA); this interaction blocks autophosphorylation. Interacts with PTPRE. Interacts with STAT5B (via SH2 domain). Interacts with PTPRF. Interacts with ATIC; ATIC together with PRKAA2/AMPK2 and HACD3/PTPLAD1 is proposed to be part of a signaling netwok regulating INSR autophosphorylation and endocytosis. Interacts with the insulin receptor SORL1; this interaction strongly increases its surface exposure, hence strengthens insulin signal reception. Interacts (tyrosine phosphorylated) with CCDC88A/GIV (via SH2-like region); binding requires autophosphorylation of the INSR C-terminal region. Interacts with GNAI3; the interaction is probably mediated by CCDC88A/GIV. Interacts with LMBRD1. Interacts (in response to insulin stimulation) with NCK1; this interaction may recruit PTPN1 to mediate INSR dephosphorylation. Post-translationally, after being transported from the endoplasmic reticulum to the Golgi apparatus, the single glycosylated precursor is further glycosylated and then cleaved, followed by its transport to the plasma membrane. Autophosphorylated on tyrosine residues in response to insulin. Dephosphorylated by PTPN1, PTPRE and PTPRF. Dephosphorylated by PTPN2; down-regulates insulin-induced signaling. In terms of processing, S-nitrosylation by BLVRB inhibits the receptor tyrosine kinase, thereby inhibiting insulin signaling.

It localises to the cell membrane. It is found in the late endosome. The protein localises to the lysosome. It catalyses the reaction L-tyrosyl-[protein] + ATP = O-phospho-L-tyrosyl-[protein] + ADP + H(+). Activated in response to insulin. Autophosphorylation activates the kinase activity. PTPN1, PTPRE and PTPRF dephosphorylate important tyrosine residues, thereby reducing INSR activity. Inhibited by ENPP1. GRB10 and GRB14 inhibit the catalytic activity of the INSR, they block access of substrates to the activated receptor. SOCS1 and SOCS3 act as negative regulators of INSR activity, they bind to the activated INRS and interfere with the phosphorylation of INSR substrates. Functionally, receptor tyrosine kinase which mediates the pleiotropic actions of insulin. Binding of insulin leads to phosphorylation of several intracellular substrates, including, insulin receptor substrates (IRS1, 2, 3, 4), SHC, GAB1, CBL and other signaling intermediates. Each of these phosphorylated proteins serve as docking proteins for other signaling proteins that contain Src-homology-2 domains (SH2 domain) that specifically recognize different phosphotyrosine residues, including the p85 regulatory subunit of PI3K and SHP2. Phosphorylation of IRSs proteins lead to the activation of two main signaling pathways: the PI3K-AKT/PKB pathway, which is responsible for most of the metabolic actions of insulin, and the Ras-MAPK pathway, which regulates expression of some genes and cooperates with the PI3K pathway to control cell growth and differentiation. Binding of the SH2 domains of PI3K to phosphotyrosines on IRS1 leads to the activation of PI3K and the generation of phosphatidylinositol-(3, 4, 5)-triphosphate (PIP3), a lipid second messenger, which activates several PIP3-dependent serine/threonine kinases, such as PDPK1 and subsequently AKT/PKB. The net effect of this pathway is to produce a translocation of the glucose transporter SLC2A4/GLUT4 from cytoplasmic vesicles to the cell membrane to facilitate glucose transport. Moreover, upon insulin stimulation, activated AKT/PKB is responsible for: anti-apoptotic effect of insulin by inducing phosphorylation of BAD; regulates the expression of gluconeogenic and lipogenic enzymes by controlling the activity of the winged helix or forkhead (FOX) class of transcription factors. Another pathway regulated by PI3K-AKT/PKB activation is mTORC1 signaling pathway which regulates cell growth and metabolism and integrates signals from insulin. AKT mediates insulin-stimulated protein synthesis by phosphorylating TSC2 thereby activating mTORC1 pathway. The Ras/RAF/MAP2K/MAPK pathway is mainly involved in mediating cell growth, survival and cellular differentiation of insulin. Phosphorylated IRS1 recruits GRB2/SOS complex, which triggers the activation of the Ras/RAF/MAP2K/MAPK pathway. In addition to binding insulin, the insulin receptor can bind insulin-like growth factors (IGFI and IGFII). When present in a hybrid receptor with IGF1R, binds IGF1. In adipocytes, inhibits lipolysis. This Macaca mulatta (Rhesus macaque) protein is Insulin receptor (INSR).